A 356-amino-acid chain; its full sequence is Butyrate kinase (356 aa).

The protein belongs to the acetokinase family.

It is found in the cytoplasm. The catalysed reaction is butanoate + ATP = butanoyl phosphate + ADP. It functions in the pathway lipid metabolism; butanoate metabolism. Functionally, catalyzes the conversion of butyryl-CoA through butyryl phosphate to butyrate. This chain is Butyrate kinase, found in Clostridium tetani (strain Massachusetts / E88).